A 468-amino-acid chain; its full sequence is Tissue alpha-L-fucosidase (468 aa).

A signal peptide spans 1–22 (MRSWVVGARLLLLLQLVLVLGA). At T173 the chain carries Phosphothreonine. N-linked (GlcNAc...) asparagine glycans are attached at residues N244, N271, and N320.

This sequence belongs to the glycosyl hydrolase 29 family. Homotetramer.

It localises to the lysosome. It catalyses the reaction an alpha-L-fucoside + H2O = L-fucose + an alcohol. It carries out the reaction a neolactoside IV(2)-alpha-Fuc-nLc4Cer(d18:1(4E)) + H2O = a neolactoside nLc4Cer(d18:1(4E)) + L-fucose. The catalysed reaction is a neolactoside IV(2)-alpha-Fuc-nLc4Cer(d18:0) + H2O = a neolactoside nLc4Cer(d18:0) + L-fucose. Alpha-L-fucosidase is responsible for hydrolyzing the alpha-1,6-linked fucose joined to the reducing-end N-acetylglucosamine of the carbohydrate moieties of glycoproteins. The polypeptide is Tissue alpha-L-fucosidase (FUCA1) (Bos taurus (Bovine)).